The following is a 699-amino-acid chain: Elongation factor G (699 aa).

Residues 8-283 (EHIRNIGICA…AVVDFLPSPI (276 aa)) form the tr-type G domain. GTP is bound by residues 17 to 24 (AHIDAGKT), 81 to 85 (DTPGH), and 135 to 138 (NKMD).

It belongs to the TRAFAC class translation factor GTPase superfamily. Classic translation factor GTPase family. EF-G/EF-2 subfamily.

It localises to the cytoplasm. Its function is as follows. Catalyzes the GTP-dependent ribosomal translocation step during translation elongation. During this step, the ribosome changes from the pre-translocational (PRE) to the post-translocational (POST) state as the newly formed A-site-bound peptidyl-tRNA and P-site-bound deacylated tRNA move to the P and E sites, respectively. Catalyzes the coordinated movement of the two tRNA molecules, the mRNA and conformational changes in the ribosome. The chain is Elongation factor G from Rickettsia conorii (strain ATCC VR-613 / Malish 7).